A 316-amino-acid chain; its full sequence is MWLYLVALVGLWTLLRFFRERQVVSHLQDKYVFITGCDSGFGNLLARQLDRRGMRVLAACLTEKGAEQLRNKTSDRLETVILDVTKTESIVAATQWVKERVGNRGLWGLVNNAGICVFAINEWLKKEDFANILDVNLLGMIEVTLSMLPLVRKARGRVVNISSSMGRVSLCGGGYCISKYGVEAFSDSLRREISYFGVKVAIIEPGGFRTNVSNYERLSHSIEKLWDQTSSEVKEVYDKNFLDSYIKAIQSLTDTCSDDLSVVTDCMEHALTACHPRTRYSAGWDAKLFYLPLSYMPTFLVDAMLYWSSVKPAQAL.

33-57 (FITGCDSGFGNLLARQLDRRGMRVL) contacts NADP(+). Ser163 lines the substrate pocket. Residue Tyr175 is the Proton acceptor of the active site.

The protein belongs to the short-chain dehydrogenases/reductases (SDR) family. Highly expressed in liver. Also expressed in lung, eye, kidney, and brain.

The protein localises to the microsome. It is found in the endoplasmic reticulum. The enzyme catalyses all-trans-retinol--[retinol-binding protein] + NAD(+) = all-trans-retinal--[retinol-binding protein] + NADH + H(+). It participates in cofactor metabolism; retinol metabolism. In terms of biological role, acts on androgens and retinols, i.e. has steroid 3-alpha- and 17-beta-dehydrogenase and cis/trans-retinol catalytic activities. This Mus musculus (Mouse) protein is Retinol dehydrogenase 7 (Rdh7).